Here is a 279-residue protein sequence, read N- to C-terminus: Energy-coupling factor transporter ATP-binding protein EcfA (279 aa).

Residues 4–239 form the ABC transporter domain; the sequence is VETKDLYFRY…VETIRKANLR (236 aa). 37-44 contacts ATP; sequence GPNGAGKS.

Belongs to the ABC transporter superfamily. Energy-coupling factor EcfA family. Forms a stable energy-coupling factor (ECF) transporter complex composed of 2 membrane-embedded substrate-binding proteins (S component), 2 ATP-binding proteins (A component) and 2 transmembrane proteins (T component).

It is found in the cell membrane. Its function is as follows. ATP-binding (A) component of a common energy-coupling factor (ECF) ABC-transporter complex. Unlike classic ABC transporters this ECF transporter provides the energy necessary to transport a number of different substrates. The polypeptide is Energy-coupling factor transporter ATP-binding protein EcfA (Methanocaldococcus jannaschii (strain ATCC 43067 / DSM 2661 / JAL-1 / JCM 10045 / NBRC 100440) (Methanococcus jannaschii)).